The chain runs to 350 residues: MPTSGFVRSTGVFMMAPSAAAKTPITIRLCGPRGFCAGVDRAIQIVVLALKEFGAPVYVRHEIVHNRYVVEGLEAKGAIFVEELDEIPPEHRKQPVVFSAHGVPKSVPADADERNLFYLDATCPLVSKVHKQAMRHHRMGRHVVLIGHAGHPEVIGTMGQLPEGAVSLVETVEDADVYMPPDADNLGFVTQTTLSVDDTAGVIKRLHERFPNLTAPAADSICYATTNRQEAVKQAAPGCDLFLVVGAPNSSNSKRLVEVALRAGAKKAVLVQRASEIDWSTVGDISMVGLSAGASAPEVIVNEIIEAFRDRYDATVELADTVEENEHFLVNRELRHVELTGADMAFVNGE.

Cys-36 provides a ligand contact to [4Fe-4S] cluster. His-65 and His-101 together coordinate (2E)-4-hydroxy-3-methylbut-2-enyl diphosphate. Residues His-65 and His-101 each coordinate dimethylallyl diphosphate. Isopentenyl diphosphate is bound by residues His-65 and His-101. [4Fe-4S] cluster is bound at residue Cys-123. His-151 contributes to the (2E)-4-hydroxy-3-methylbut-2-enyl diphosphate binding site. His-151 provides a ligand contact to dimethylallyl diphosphate. His-151 serves as a coordination point for isopentenyl diphosphate. Glu-153 acts as the Proton donor in catalysis. (2E)-4-hydroxy-3-methylbut-2-enyl diphosphate is bound at residue Thr-192. Cys-222 contacts [4Fe-4S] cluster. Residues Ser-250, Ser-251, Asn-252, and Ser-295 each coordinate (2E)-4-hydroxy-3-methylbut-2-enyl diphosphate. Dimethylallyl diphosphate contacts are provided by Ser-250, Ser-251, Asn-252, and Ser-295. Positions 250, 251, 252, and 295 each coordinate isopentenyl diphosphate.

Belongs to the IspH family. Requires [4Fe-4S] cluster as cofactor.

The enzyme catalyses isopentenyl diphosphate + 2 oxidized [2Fe-2S]-[ferredoxin] + H2O = (2E)-4-hydroxy-3-methylbut-2-enyl diphosphate + 2 reduced [2Fe-2S]-[ferredoxin] + 2 H(+). It catalyses the reaction dimethylallyl diphosphate + 2 oxidized [2Fe-2S]-[ferredoxin] + H2O = (2E)-4-hydroxy-3-methylbut-2-enyl diphosphate + 2 reduced [2Fe-2S]-[ferredoxin] + 2 H(+). The protein operates within isoprenoid biosynthesis; dimethylallyl diphosphate biosynthesis; dimethylallyl diphosphate from (2E)-4-hydroxy-3-methylbutenyl diphosphate: step 1/1. It participates in isoprenoid biosynthesis; isopentenyl diphosphate biosynthesis via DXP pathway; isopentenyl diphosphate from 1-deoxy-D-xylulose 5-phosphate: step 6/6. Functionally, catalyzes the conversion of 1-hydroxy-2-methyl-2-(E)-butenyl 4-diphosphate (HMBPP) into a mixture of isopentenyl diphosphate (IPP) and dimethylallyl diphosphate (DMAPP). Acts in the terminal step of the DOXP/MEP pathway for isoprenoid precursor biosynthesis. In Rhizobium meliloti (strain 1021) (Ensifer meliloti), this protein is 4-hydroxy-3-methylbut-2-enyl diphosphate reductase.